The chain runs to 278 residues: Alpha-tocopherol transfer protein (278 aa).

The CRAL-TRIO domain maps to 88-253 (RPRSILGLLK…EYGGKEFSME (166 aa)). D185 contacts a 1,2-diacyl-sn-glycero-3-phospho-(1D-myo-inositol-3,4-bisphosphate). A (+)-alpha-tocopherol-binding site is contributed by F187. A 1,2-diacyl-sn-glycero-3-phospho-(1D-myo-inositol-3,4-bisphosphate) is bound at residue 190 to 192 (KVR). Position 208-211 (208-211 (SMIK)) interacts with a 1,2-diacyl-sn-glycero-3-phospho-(1D-myo-inositol-4,5-bisphosphate). K217 and R221 together coordinate a 1,2-diacyl-sn-glycero-3-phospho-(1D-myo-inositol-3,4-bisphosphate).

In terms of assembly, monomer and homotetramer. Phosphatidylinositol 4,5-bisphosphate binding induces the formation of homotetramers. Phosphatidylinositol 3,4-bisphosphate is less efficient in inducing tetramerization.

The protein resides in the cytoplasm. In terms of biological role, binds (+)-alpha-tocopherol, enhances its transfer between separate membranes, and stimulates its release from liver cells. Binds both phosphatidylinositol 3,4-bisphosphate and phosphatidylinositol 4,5-bisphosphate; the resulting conformation change is important for the release of the bound alpha-tocopherol. This Mus musculus (Mouse) protein is Alpha-tocopherol transfer protein (Ttpa).